The primary structure comprises 607 residues: Thymidine kinase (607 aa).

2 disordered regions span residues 1-160 and 180-215; these read MAGF…ADST and DDKSDCESEDESNFRRPSSHSALKQKNGGKGKPSGL. The segment covering 17-32 has biased composition (basic and acidic residues); the sequence is KCQEDESPENERHENF. Polar residues-rich tracts occupy residues 88–106, 148–160, and 194–203; these read AAVTSNTGNSPGSRHTSCP, RKTSCTEGGADST, and RRPSSHSALK. Position 291–298 (291–298) interacts with ATP; it reads GAPGVGKT. Glu317 serves as the catalytic Proton acceptor. Substrate is bound at residue Gln355. Arg445 provides a ligand contact to ATP. Arg451 provides a ligand contact to substrate.

Belongs to the herpesviridae thymidine kinase family. In terms of assembly, homodimer.

The protein localises to the virion tegument. It localises to the host nucleus. The enzyme catalyses thymidine + ATP = dTMP + ADP + H(+). In terms of biological role, catalyzes the transfer of the gamma-phospho group of ATP to thymidine to generate dTMP in the salvage pathway of pyrimidine synthesis. The dTMP serves as a substrate for DNA polymerase during viral DNA replication. Allows the virus to be reactivated and to grow in non-proliferative cells lacking a high concentration of phosphorylated nucleic acid precursors. This chain is Thymidine kinase, found in Epstein-Barr virus (strain GD1) (HHV-4).